The primary structure comprises 492 residues: Trehalose-6-phosphate synthase (492 aa).

Position 25 (arginine 25) interacts with D-glucose 6-phosphate. 45–46 (GG) provides a ligand contact to UDP-alpha-D-glucose. D-glucose 6-phosphate-binding residues include tyrosine 101 and aspartate 155. UDP-alpha-D-glucose is bound by residues arginine 297 and lysine 302. Residue arginine 335 coordinates D-glucose 6-phosphate. 400 to 404 (LVAKE) provides a ligand contact to UDP-alpha-D-glucose.

Belongs to the glycosyltransferase 20 family. As to quaternary structure, homotetramer.

It carries out the reaction ADP-alpha-D-glucose + D-glucose 6-phosphate = alpha,alpha-trehalose 6-phosphate + ADP + H(+). It catalyses the reaction CDP-alpha-D-glucose + D-glucose 6-phosphate = alpha,alpha-trehalose 6-phosphate + CDP + H(+). The enzyme catalyses GDP-alpha-D-glucose + D-glucose 6-phosphate = alpha,alpha-trehalose 6-phosphate + GDP + H(+). The catalysed reaction is TDP-alpha-D-glucose + D-glucose 6-phosphate = 5-methyl-UDP + alpha,alpha-trehalose 6-phosphate + H(+). It carries out the reaction D-glucose 6-phosphate + UDP-alpha-D-glucose = alpha,alpha-trehalose 6-phosphate + UDP + H(+). It participates in glycan biosynthesis; trehalose biosynthesis. Probably involved in the osmoprotection via the biosynthesis of trehalose and in the production of glycogen and alpha-glucan via the TreS-Pep2 branch involved in the biosynthesis of maltose-1-phosphate (M1P). Catalyzes the transfer of glucose from UDP-glucose (UDP-Glc) to D-glucose 6-phosphate (Glc-6-P) to form trehalose-6-phosphate. Probably also able to use ADP-Glc, CDP-Glc, GDP-Glc and TDP-Glc as glucosyl donors. This is Trehalose-6-phosphate synthase from Mycolicibacterium paratuberculosis (strain ATCC BAA-968 / K-10) (Mycobacterium paratuberculosis).